Consider the following 222-residue polypeptide: Uracil-DNA glycosylase (222 aa).

The Proton acceptor role is filled by aspartate 61.

This sequence belongs to the uracil-DNA glycosylase (UDG) superfamily. UNG family.

The protein localises to the cytoplasm. The enzyme catalyses Hydrolyzes single-stranded DNA or mismatched double-stranded DNA and polynucleotides, releasing free uracil.. Functionally, excises uracil residues from the DNA which can arise as a result of misincorporation of dUMP residues by DNA polymerase or due to deamination of cytosine. This Aeromonas salmonicida (strain A449) protein is Uracil-DNA glycosylase.